Consider the following 247-residue polypeptide: Phosphonates import ATP-binding protein PhnC (247 aa).

Residues 5–246 (IEVKNLVKNY…EDDIRKVYQT (242 aa)) form the ABC transporter domain. Residue 37–44 (GESGAGKS) participates in ATP binding.

Belongs to the ABC transporter superfamily. Phosphonates importer (TC 3.A.1.9.1) family. The complex is composed of two ATP-binding proteins (PhnC), two transmembrane proteins (PhnE) and a solute-binding protein (PhnD).

Its subcellular location is the cell inner membrane. The enzyme catalyses phosphonate(out) + ATP + H2O = phosphonate(in) + ADP + phosphate + H(+). Part of the ABC transporter complex PhnCDE involved in phosphonates import. Responsible for energy coupling to the transport system. The sequence is that of Phosphonates import ATP-binding protein PhnC from Fusobacterium nucleatum subsp. nucleatum (strain ATCC 25586 / DSM 15643 / BCRC 10681 / CIP 101130 / JCM 8532 / KCTC 2640 / LMG 13131 / VPI 4355).